Here is a 293-residue protein sequence, read N- to C-terminus: Cytidine deaminase 8 (293 aa).

2 consecutive CMP/dCMP-type deaminase domains span residues 20–151 (FTPQ…LISQ) and 181–293 (EHCN…LHCK). 61–63 (NVE) provides a ligand contact to substrate. Histidine 74 serves as a coordination point for Zn(2+). Glutamate 76 (proton donor) is an active-site residue. Residues cysteine 107 and cysteine 110 each coordinate Zn(2+).

It belongs to the cytidine and deoxycytidylate deaminase family. Homodimer. The cofactor is Zn(2+).

It carries out the reaction cytidine + H2O + H(+) = uridine + NH4(+). The catalysed reaction is 2'-deoxycytidine + H2O + H(+) = 2'-deoxyuridine + NH4(+). In terms of biological role, this enzyme scavenges exogenous and endogenous cytidine and 2'-deoxycytidine for UMP synthesis. This is Cytidine deaminase 8 (CDA8) from Arabidopsis thaliana (Mouse-ear cress).